The chain runs to 270 residues: Cell division protein DivIB (270 aa).

Residues 1–28 lie on the Cytoplasmic side of the membrane; sequence MAENKRVISIENRIPELKKYRKKKLVRH. A helical transmembrane segment spans residues 29-49; sequence LAILIGIFVILIAITLYFLSP. Over 50–270 the chain is Extracellular; the sequence is LSKLDKIAVS…AAKEKKETNE (221 aa). Residues 51-119 form the POTRA domain; the sequence is SKLDKIAVSG…NDVQINITEF (69 aa).

Belongs to the FtsQ/DivIB family. DivIB subfamily.

The protein localises to the cell membrane. Its function is as follows. Cell division protein that may be involved in stabilizing or promoting the assembly of the division complex. The polypeptide is Cell division protein DivIB (Listeria monocytogenes serovar 1/2a (strain ATCC BAA-679 / EGD-e)).